Consider the following 49-residue polypeptide: uncharacterized protein (49 aa).

The chain crosses the membrane as a helical span at residues tryptophan 16–phenylalanine 36.

The protein localises to the cell membrane. This is an uncharacterized protein from Bacillus subtilis (strain 168).